The chain runs to 256 residues: Thioredoxin-dependent peroxide reductase, mitochondrial (256 aa).

The N-terminal 61 residues, 1–61, are a transit peptide targeting the mitochondrion; it reads MAAAVGRLLR…KLFSTSSSYH (61 aa). The region spanning 63-221 is the Thioredoxin domain; the sequence is PAVTQHAPYF…TLRLVKAFQY (159 aa). Position 83 is an N6-succinyllysine (Lys83). Residue Lys91 is modified to N6-acetyllysine; alternate. At Lys91 the chain carries N6-succinyllysine; alternate. The active-site Cysteine sulfenic acid (-SOH) intermediate is the Cys108. Thr146 is modified (phosphothreonine).

Belongs to the peroxiredoxin family. AhpC/Prx1 subfamily. Homodimer; disulfide-linked, upon oxidation. 6 homodimers assemble to form a ring-like dodecamer. Interacts with NEK6. Interacts with LRRK2. Interacts with MAP3K13. Interacts with RPS6KC1 (via PX domain). In terms of processing, phosphorylated by LRRK2; phosphorylation reduces perodixase activity. The enzyme can be inactivated by further oxidation of the cysteine sulfenic acid (C(P)-SOH) to sulphinic acid (C(P)-SO2H) and sulphonic acid (C(P)-SO3H) instead of its condensation to a disulfide bond. Post-translationally, S-palmitoylated.

The protein localises to the mitochondrion. The protein resides in the cytoplasm. It localises to the early endosome. The catalysed reaction is a hydroperoxide + [thioredoxin]-dithiol = an alcohol + [thioredoxin]-disulfide + H2O. In terms of biological role, thiol-specific peroxidase that catalyzes the reduction of hydrogen peroxide and organic hydroperoxides to water and alcohols, respectively. Plays a role in cell protection against oxidative stress by detoxifying peroxides. Acts synergistically with MAP3K13 to regulate the activation of NF-kappa-B in the cytosol. Required for the maintenance of physical strength. This is Thioredoxin-dependent peroxide reductase, mitochondrial (PRDX3) from Pongo abelii (Sumatran orangutan).